We begin with the raw amino-acid sequence, 842 residues long: CRM-domain containing factor CFM3, chloroplastic/mitochondrial (842 aa).

Residues 1-82 (MAMASSPACH…RSSGRSTMSL (82 aa)) constitute a chloroplast and mitochondrion transit peptide. Disordered regions lie at residues 49-80 (AALD…RSTM), 141-160 (RFPW…SARS), and 254-290 (VDYD…LPTE). Residues 167 to 263 (LTLPAAELRR…VDYDEPEPTK (97 aa)) enclose the CRM 1 domain. The span at 280–290 (GSSNPSLLPTE) shows a compositional bias: polar residues. CRM domains follow at residues 371-468 (PSLS…ELAE) and 582-682 (ETIT…SSLR). Residues 703–732 (QALSRHFAKLNRKVERLKAELVQMEDVKEQ) are a coiled coil. A disordered region spans residues 768–842 (VAGATADDDG…DRRNHDVNEY (75 aa)). Acidic residues predominate over residues 786-812 (DEADYPDSDDEAGDCSEDEGEDDEDEA). Basic and acidic residues predominate over residues 831-842 (DTDRRNHDVNEY).

As to quaternary structure, interacts with RNA. Part of large ribonucleo-protein particles that contain CAF1 and/or CAF2, and RNC1.

It is found in the plastid. Its subcellular location is the chloroplast stroma. It localises to the mitochondrion. Functionally, binds specific group II introns in chloroplasts and facilitates their splicing. Acts on subgroup IIB introns. The substrates of the subgroup IIB also require the CRM domain proteins CAF1 or CAF2, with a simultaneous binding of CFM3 and CAF1 or CAF2. May influence the biogenesis of the mitochondrial small ribosomal subunit. The polypeptide is CRM-domain containing factor CFM3, chloroplastic/mitochondrial (Zea mays (Maize)).